Consider the following 194-residue polypeptide: Anthranilate synthase component 2 (194 aa).

The 193-residue stretch at 2–194 (KIFFIDNFDS…QSVGFLRELS (193 aa)) folds into the Glutamine amidotransferase type-1 domain. 57–59 (GPG) provides a ligand contact to L-glutamine. Cysteine 84 functions as the Nucleophile; for GATase activity in the catalytic mechanism. L-glutamine-binding positions include glutamine 88 and 134 to 135 (SL). Catalysis depends on for GATase activity residues histidine 170 and glutamate 172.

In terms of assembly, heterotetramer consisting of two non-identical subunits: a beta subunit (TrpG) and a large alpha subunit (TrpE).

The enzyme catalyses chorismate + L-glutamine = anthranilate + pyruvate + L-glutamate + H(+). It functions in the pathway amino-acid biosynthesis; L-tryptophan biosynthesis; L-tryptophan from chorismate: step 1/5. Its function is as follows. Part of a heterotetrameric complex that catalyzes the two-step biosynthesis of anthranilate, an intermediate in the biosynthesis of L-tryptophan. In the first step, the glutamine-binding beta subunit (TrpG) of anthranilate synthase (AS) provides the glutamine amidotransferase activity which generates ammonia as a substrate that, along with chorismate, is used in the second step, catalyzed by the large alpha subunit of AS (TrpE) to produce anthranilate. In the absence of TrpG, TrpE can synthesize anthranilate directly from chorismate and high concentrations of ammonia. The polypeptide is Anthranilate synthase component 2 (trpG) (Helicobacter pylori (strain J99 / ATCC 700824) (Campylobacter pylori J99)).